The primary structure comprises 220 residues: 7-cyano-7-deazaguanine synthase (220 aa).

10 to 20 contributes to the ATP binding site; sequence FSGGQDSTTCL. Residues C186, C195, C198, and C201 each contribute to the Zn(2+) site.

Belongs to the QueC family. As to quaternary structure, homodimer. Zn(2+) is required as a cofactor.

It carries out the reaction 7-carboxy-7-deazaguanine + NH4(+) + ATP = 7-cyano-7-deazaguanine + ADP + phosphate + H2O + H(+). It participates in purine metabolism; 7-cyano-7-deazaguanine biosynthesis. Catalyzes the ATP-dependent conversion of 7-carboxy-7-deazaguanine (CDG) to 7-cyano-7-deazaguanine (preQ(0)). The polypeptide is 7-cyano-7-deazaguanine synthase (Bacillus thuringiensis (strain Al Hakam)).